Reading from the N-terminus, the 100-residue chain is Large ribosomal subunit protein eL30 (100 aa).

It belongs to the eukaryotic ribosomal protein eL30 family.

The sequence is that of Large ribosomal subunit protein eL30 (rpl30e) from Aeropyrum pernix (strain ATCC 700893 / DSM 11879 / JCM 9820 / NBRC 100138 / K1).